The sequence spans 559 residues: Thermosome subunit alpha (559 aa).

Positions 535-547 (SEKKGGEGSKEES) are enriched in basic and acidic residues. Residues 535-559 (SEKKGGEGSKEESGGEGGSTPSLGD) form a disordered region.

This sequence belongs to the TCP-1 chaperonin family. In terms of assembly, forms a Heterooligomeric complex of two stacked eight-membered rings.

Its function is as follows. Molecular chaperone; binds unfolded polypeptides in vitro, and has a weak ATPase activity. The sequence is that of Thermosome subunit alpha (thsA) from Saccharolobus solfataricus (strain ATCC 35092 / DSM 1617 / JCM 11322 / P2) (Sulfolobus solfataricus).